The sequence spans 292 residues: uncharacterized protein (292 aa).

The chain crosses the membrane as a helical span at residues 13 to 35 (LFILFIIVVCIYLLPRVAINAFY).

The protein belongs to the serine esterase family.

The protein localises to the membrane. This is an uncharacterized protein from Salmonella typhimurium (strain LT2 / SGSC1412 / ATCC 700720).